The sequence spans 327 residues: Glycerol-3-phosphate dehydrogenase [NAD(P)+] (327 aa).

Tryptophan 15, arginine 35, and lysine 109 together coordinate NADPH. Positions 109, 137, and 139 each coordinate sn-glycerol 3-phosphate. Alanine 141 contacts NADPH. Sn-glycerol 3-phosphate is bound by residues lysine 192, aspartate 245, serine 255, arginine 256, and asparagine 257. Lysine 192 acts as the Proton acceptor in catalysis. Residue arginine 256 coordinates NADPH. NADPH contacts are provided by leucine 275 and glutamate 277.

Belongs to the NAD-dependent glycerol-3-phosphate dehydrogenase family.

It is found in the cytoplasm. The enzyme catalyses sn-glycerol 3-phosphate + NAD(+) = dihydroxyacetone phosphate + NADH + H(+). It catalyses the reaction sn-glycerol 3-phosphate + NADP(+) = dihydroxyacetone phosphate + NADPH + H(+). It functions in the pathway membrane lipid metabolism; glycerophospholipid metabolism. Catalyzes the reduction of the glycolytic intermediate dihydroxyacetone phosphate (DHAP) to sn-glycerol 3-phosphate (G3P), the key precursor for phospholipid synthesis. This Chelativorans sp. (strain BNC1) protein is Glycerol-3-phosphate dehydrogenase [NAD(P)+].